The chain runs to 225 residues: Uracil-DNA glycosylase (225 aa).

D64 (proton acceptor) is an active-site residue.

Belongs to the uracil-DNA glycosylase (UDG) superfamily. UNG family.

Its subcellular location is the cytoplasm. The catalysed reaction is Hydrolyzes single-stranded DNA or mismatched double-stranded DNA and polynucleotides, releasing free uracil.. In terms of biological role, excises uracil residues from the DNA which can arise as a result of misincorporation of dUMP residues by DNA polymerase or due to deamination of cytosine. This Lachnoclostridium phytofermentans (strain ATCC 700394 / DSM 18823 / ISDg) (Clostridium phytofermentans) protein is Uracil-DNA glycosylase.